The following is an 88-amino-acid chain: UPF0297 protein LACR_0137 (88 aa).

The protein belongs to the UPF0297 family.

This Lactococcus lactis subsp. cremoris (strain SK11) protein is UPF0297 protein LACR_0137.